The following is a 195-amino-acid chain: Peptidyl-tRNA hydrolase (195 aa).

Residue Tyr17 participates in tRNA binding. The active-site Proton acceptor is His22. Positions 68, 70, and 116 each coordinate tRNA.

The protein belongs to the PTH family. In terms of assembly, monomer.

It localises to the cytoplasm. It carries out the reaction an N-acyl-L-alpha-aminoacyl-tRNA + H2O = an N-acyl-L-amino acid + a tRNA + H(+). Its function is as follows. Hydrolyzes ribosome-free peptidyl-tRNAs (with 1 or more amino acids incorporated), which drop off the ribosome during protein synthesis, or as a result of ribosome stalling. Functionally, catalyzes the release of premature peptidyl moieties from peptidyl-tRNA molecules trapped in stalled 50S ribosomal subunits, and thus maintains levels of free tRNAs and 50S ribosomes. In Shewanella putrefaciens (strain CN-32 / ATCC BAA-453), this protein is Peptidyl-tRNA hydrolase.